A 945-amino-acid chain; its full sequence is Isoleucine--tRNA ligase (945 aa).

Basic and acidic residues predominate over residues 1-10 (MSNKKADSKP). Residues 1-21 (MSNKKADSKPQAKYPVNLLDT) form a disordered region. The short motif at 66–76 (PYANGDIHLGH) is the 'HIGH' region element. Position 581 (Glu581) interacts with L-isoleucyl-5'-AMP. A 'KMSKS' region motif is present at residues 622-626 (KMSKS). An ATP-binding site is contributed by Lys625. Residues Cys908, Cys911, Cys928, and Cys931 each contribute to the Zn(2+) site.

The protein belongs to the class-I aminoacyl-tRNA synthetase family. IleS type 1 subfamily. In terms of assembly, monomer. Requires Zn(2+) as cofactor.

The protein localises to the cytoplasm. The enzyme catalyses tRNA(Ile) + L-isoleucine + ATP = L-isoleucyl-tRNA(Ile) + AMP + diphosphate. Functionally, catalyzes the attachment of isoleucine to tRNA(Ile). As IleRS can inadvertently accommodate and process structurally similar amino acids such as valine, to avoid such errors it has two additional distinct tRNA(Ile)-dependent editing activities. One activity is designated as 'pretransfer' editing and involves the hydrolysis of activated Val-AMP. The other activity is designated 'posttransfer' editing and involves deacylation of mischarged Val-tRNA(Ile). The sequence is that of Isoleucine--tRNA ligase from Burkholderia multivorans (strain ATCC 17616 / 249).